A 165-amino-acid polypeptide reads, in one-letter code: Phosphopantetheine adenylyltransferase (165 aa).

Ser9 contributes to the substrate binding site. Residues Ser9–Phe10 and His17 contribute to the ATP site. 3 residues coordinate substrate: Lys41, Leu73, and Lys87. ATP-binding positions include Gly88–Arg90, Glu98, and Tyr122–Ser128.

Belongs to the bacterial CoaD family. Homohexamer. The cofactor is Mg(2+).

It localises to the cytoplasm. It carries out the reaction (R)-4'-phosphopantetheine + ATP + H(+) = 3'-dephospho-CoA + diphosphate. Its pathway is cofactor biosynthesis; coenzyme A biosynthesis; CoA from (R)-pantothenate: step 4/5. Reversibly transfers an adenylyl group from ATP to 4'-phosphopantetheine, yielding dephospho-CoA (dPCoA) and pyrophosphate. The sequence is that of Phosphopantetheine adenylyltransferase from Acidothermus cellulolyticus (strain ATCC 43068 / DSM 8971 / 11B).